Reading from the N-terminus, the 244-residue chain is Eukaryotic translation initiation factor 4E type 1B (244 aa).

Basic and acidic residues predominate over residues 1-26; that stretch reads MNKVEGGGHKEEVVVKEKEVVKEKPS. The segment at 1-57 is disordered; that stretch reads MNKVEGGGHKEEVVVKEKEVVKEKPSEATAEGVQAGEAKDLPGSLKTQRRKAHREHP. The tract at residues 65-68 is EIF4EBP1/2/3 binding; the sequence is HPLQ. 84–85 is a binding site for mRNA; that stretch reads WQ. The tract at residues 101 to 105 is EIF4EBP1/2/3 binding; the sequence is WAVYS. Residue 130–131 coordinates mRNA; it reads WE. Positions 160–167 are EIF4EBP1/2/3 binding; it reads ETLLCLVG. MRNA-binding positions include 185 to 190 and 233 to 235; these read RTKRDK and AKS.

The protein belongs to the eukaryotic initiation factor 4E family. In terms of assembly, EIF4F is a multi-subunit complex, the composition of which varies with external and internal environmental conditions. It is composed of at least EIF4A, EIF4E and EIF4G.

In terms of biological role, recognizes and binds the 7-methylguanosine-containing mRNA cap during an early step in the initiation of protein synthesis and facilitates ribosome binding by inducing the unwinding of the mRNAs secondary structures. In Mus musculus (Mouse), this protein is Eukaryotic translation initiation factor 4E type 1B (Eif4e1b).